A 435-amino-acid chain; its full sequence is Serine hydroxymethyltransferase (435 aa).

(6S)-5,6,7,8-tetrahydrofolate-binding positions include leucine 133 and 137-139 (GHL). Residue lysine 242 is modified to N6-(pyridoxal phosphate)lysine.

This sequence belongs to the SHMT family. As to quaternary structure, homodimer. Pyridoxal 5'-phosphate is required as a cofactor.

The protein resides in the cytoplasm. It catalyses the reaction (6R)-5,10-methylene-5,6,7,8-tetrahydrofolate + glycine + H2O = (6S)-5,6,7,8-tetrahydrofolate + L-serine. The protein operates within one-carbon metabolism; tetrahydrofolate interconversion. Its pathway is amino-acid biosynthesis; glycine biosynthesis; glycine from L-serine: step 1/1. Its function is as follows. Catalyzes the reversible interconversion of serine and glycine with tetrahydrofolate (THF) serving as the one-carbon carrier. This reaction serves as the major source of one-carbon groups required for the biosynthesis of purines, thymidylate, methionine, and other important biomolecules. Also exhibits THF-independent aldolase activity toward beta-hydroxyamino acids, producing glycine and aldehydes, via a retro-aldol mechanism. The protein is Serine hydroxymethyltransferase of Hyphomonas neptunium (strain ATCC 15444).